A 121-amino-acid chain; its full sequence is Large ribosomal subunit protein uL14 (121 aa).

Belongs to the universal ribosomal protein uL14 family. As to quaternary structure, part of the 50S ribosomal subunit. Forms a cluster with proteins L3 and L19. In the 70S ribosome, L14 and L19 interact and together make contacts with the 16S rRNA in bridges B5 and B8.

Its function is as follows. Binds to 23S rRNA. Forms part of two intersubunit bridges in the 70S ribosome. The protein is Large ribosomal subunit protein uL14 of Synechococcus elongatus (strain ATCC 33912 / PCC 7942 / FACHB-805) (Anacystis nidulans R2).